The primary structure comprises 1801 residues: Sperm flagellar protein 2 (1801 aa).

Positions 1–105 (MSEILCQWLN…LLYQLYIALQ (105 aa)) constitute a Calponin-homology (CH) domain. 2 coiled-coil regions span residues 176–260 (EKFE…KDLQ) and 321–395 (AHEA…TKQA). The tract at residues 632–659 (QDKNELTDTQVPGEAAPQKEGTKSSDFE) is disordered. 2 coiled-coil regions span residues 722 to 748 (NQAK…KAQM) and 869 to 895 (ATEV…SAVS). Basic and acidic residues-rich tracts occupy residues 883-892 (LEEKETEKKS) and 909-918 (EAEKEKEVHQ). The disordered stretch occupies residues 883-949 (LEEKETEKKS…KISVKKSPID (67 aa)). The stretch at 1051–1077 (EDLWEDEETKAELHQRVNDLRDRLWDI) forms a coiled coil. Basic and acidic residues-rich tracts occupy residues 1233 to 1250 (RLAE…KEKS) and 1261 to 1295 (KEKE…AEKK). Disordered stretches follow at residues 1233–1304 (RLAE…SPVV), 1651–1695 (KTSI…NANT), and 1781–1801 (SEHA…DEKK). The stretch at 1252-1286 (QSGTNKKAKKEKEQAKKEKEQAKKEKEQAKKEKEP) forms a coiled coil. The interval 1305–1657 (EVSPVTITPE…TAEKTSISSV (353 aa)) is interaction with IFT20. Positions 1665–1695 (EAEENSTREELKEEKDERDQKEEEIPENANT) form a coiled coil. Over residues 1669 to 1687 (NSTREELKEEKDERDQKEE) the composition is skewed to basic and acidic residues.

Interacts (via C-terminus) with IFT20. Interacts with DYNC1I2. In terms of tissue distribution, predominantly expressed in ciliated tissues such as lung, trachea, testis, brain, and at lower levels in kidney and spleen.

It localises to the cell projection. The protein resides in the cilium. The protein localises to the flagellum. Its subcellular location is the cytoplasm. It is found in the golgi apparatus. Functionally, required for correct axoneme development in spermatozoa. Important for normal development of the manchette and sperm head morphology. Essential for male fertility. Plays a role in localization of the intraflagellar transport protein IFT20 to the manchette, suggesting function as an adapter for dynein-mediated protein transport during spermatogenesis. Also plays a role in bone growth where it seems to be required for normal osteoblast differentiation. In Rattus norvegicus (Rat), this protein is Sperm flagellar protein 2 (Spef2).